The following is a 308-amino-acid chain: Putative proline iminopeptidase (308 aa).

The region spanning 30 to 290 (KPVLYIHGGP…LYVTNNAGHS (261 aa)) is the AB hydrolase-1 domain. Ser-105 (nucleophile) is an active-site residue. Residue Asp-261 is part of the active site. The active-site Proton donor is His-289.

Belongs to the peptidase S33 family.

It localises to the cytoplasm. It carries out the reaction Release of N-terminal proline from a peptide.. Specifically catalyzes the removal of N-terminal proline residues from peptides. The chain is Putative proline iminopeptidase (pip) from Mycoplasma genitalium (strain ATCC 33530 / DSM 19775 / NCTC 10195 / G37) (Mycoplasmoides genitalium).